Reading from the N-terminus, the 120-residue chain is Non-specific lipid-transfer protein 6 (120 aa).

The N-terminal stretch at 1 to 26 is a signal peptide; sequence MARSMSLKLACVVVLCLLVDAPLAQG. Disulfide bonds link Cys-57–Cys-102 and Cys-77–Cys-116.

This sequence belongs to the plant LTP family. In terms of tissue distribution, specifically expressed in fiber cells.

In terms of biological role, plant non-specific lipid-transfer proteins transfer phospholipids as well as galactolipids across membranes. May play a role in wax or cutin deposition in the cell walls of expanding epidermal cells and certain secretory tissues. The polypeptide is Non-specific lipid-transfer protein 6 (LTP6) (Gossypium hirsutum (Upland cotton)).